We begin with the raw amino-acid sequence, 372 residues long: Ca(2+)/H(+) antiporter (372 aa).

A run of 11 helical transmembrane segments spans residues 7–27 (IFLV…LGWG), 29–49 (TTVF…MGTA), 62–82 (GGLL…YIAL), 94–114 (LTGS…FLGG), 134–154 (MNLG…STGV), 162–182 (LSVA…VFSM), 222–242 (LWTG…ELLV), 251–271 (SLGL…GNAA), 294–314 (GSSL…GWAI), 320–340 (LNFN…VNSI), and 352–372 (ILLL…PTLV).

It belongs to the Ca(2+):cation antiporter (CaCA) (TC 2.A.19) family. Cation/proton exchanger (CAX) subfamily.

Its subcellular location is the cell inner membrane. In terms of biological role, ca(+)/H(+) antiporter that extrudes calcium in exchange for external protons. Plays an important role in salt tolerance. Does not transport sodium or lithium. In Synechocystis sp. (strain ATCC 27184 / PCC 6803 / Kazusa), this protein is Ca(2+)/H(+) antiporter.